Reading from the N-terminus, the 476-residue chain is Aspartyl/glutamyl-tRNA(Asn/Gln) amidotransferase subunit B (476 aa).

This sequence belongs to the GatB/GatE family. GatB subfamily. In terms of assembly, heterotrimer of A, B and C subunits.

The catalysed reaction is L-glutamyl-tRNA(Gln) + L-glutamine + ATP + H2O = L-glutaminyl-tRNA(Gln) + L-glutamate + ADP + phosphate + H(+). The enzyme catalyses L-aspartyl-tRNA(Asn) + L-glutamine + ATP + H2O = L-asparaginyl-tRNA(Asn) + L-glutamate + ADP + phosphate + 2 H(+). Allows the formation of correctly charged Asn-tRNA(Asn) or Gln-tRNA(Gln) through the transamidation of misacylated Asp-tRNA(Asn) or Glu-tRNA(Gln) in organisms which lack either or both of asparaginyl-tRNA or glutaminyl-tRNA synthetases. The reaction takes place in the presence of glutamine and ATP through an activated phospho-Asp-tRNA(Asn) or phospho-Glu-tRNA(Gln). In Bacillus licheniformis (strain ATCC 14580 / DSM 13 / JCM 2505 / CCUG 7422 / NBRC 12200 / NCIMB 9375 / NCTC 10341 / NRRL NRS-1264 / Gibson 46), this protein is Aspartyl/glutamyl-tRNA(Asn/Gln) amidotransferase subunit B.